Reading from the N-terminus, the 427-residue chain is Enolase (427 aa).

Residue Gln-163 coordinates (2R)-2-phosphoglycerate. The active-site Proton donor is the Glu-205. Residues Asp-242, Glu-285, and Asp-312 each contribute to the Mg(2+) site. (2R)-2-phosphoglycerate is bound by residues Lys-337, Arg-366, Ser-367, and Lys-388. Catalysis depends on Lys-337, which acts as the Proton acceptor.

This sequence belongs to the enolase family. Mg(2+) is required as a cofactor.

The protein localises to the cytoplasm. It localises to the secreted. The protein resides in the cell surface. It catalyses the reaction (2R)-2-phosphoglycerate = phosphoenolpyruvate + H2O. The protein operates within carbohydrate degradation; glycolysis; pyruvate from D-glyceraldehyde 3-phosphate: step 4/5. Catalyzes the reversible conversion of 2-phosphoglycerate (2-PG) into phosphoenolpyruvate (PEP). It is essential for the degradation of carbohydrates via glycolysis. In Janthinobacterium sp. (strain Marseille) (Minibacterium massiliensis), this protein is Enolase.